The chain runs to 599 residues: Tryptophan 2-C-methyltransferase (599 aa).

The B12-binding domain maps to 4–149 (KGTVALINPN…RALAEGRSAD (146 aa)). A disordered region spans residues 167 to 197 (RVAPPALDPRAAPAPSSSPSPSPAPSSSSAP). Positions 168–181 (VAPPALDPRAAPAP) are enriched in low complexity. One can recognise a Radical SAM core domain in the interval 239–492 (YREGGLGSIL…IEYERQFMFD (254 aa)). C253, C257, and C260 together coordinate [4Fe-4S] cluster.

It depends on [4Fe-4S] cluster as a cofactor. The cofactor is cob(II)alamin.

The catalysed reaction is L-tryptophan + S-adenosyl-L-methionine = 2-methyl-L-tryptophan + S-adenosyl-L-homocysteine + H(+). Functionally, involved in the biosynthetic pathway of the antibiotic thiostrepton A. First, TsrM catalyzes the transfer of a methyl group from S-adenosyl methionine (SAM) to cobalamin, leading to the formation of methylcobalamin (CH3-cobalamin) and S-adenosyl-L-homocysteine (SAH). Then the methyl group is transferred to the C2 position of tryptophan (Trp) with the concerted action of the radical SAM [4Fe-4S] center, leading to the production of methyltryptophan. This is Tryptophan 2-C-methyltransferase from Streptomyces laurentii.